The primary structure comprises 252 residues: TVP38/TMEM64 family membrane protein Mb1528c (252 aa).

6 consecutive transmembrane segments (helical) span residues 32–52 (IVGT…VPVP), 64–84 (LGAW…VPPF), 88–108 (AFTL…IAVV), 149–169 (WLAI…INYA), 177–197 (ILSF…AVVI), and 209–229 (LLIL…VYEI).

The protein belongs to the TVP38/TMEM64 family.

It localises to the cell membrane. The chain is TVP38/TMEM64 family membrane protein Mb1528c from Mycobacterium bovis (strain ATCC BAA-935 / AF2122/97).